Here is a 64-residue protein sequence, read N- to C-terminus: MPKMKTHSGAKKRFKLTGSGKLKRQQANRRHYLEHKPSTLTRRLAADKTVSPADAKNIKKMLGI.

The interval 1 to 28 is disordered; sequence MPKMKTHSGAKKRFKLTGSGKLKRQQAN.

Belongs to the bacterial ribosomal protein bL35 family.

The protein is Large ribosomal subunit protein bL35 of Renibacterium salmoninarum (strain ATCC 33209 / DSM 20767 / JCM 11484 / NBRC 15589 / NCIMB 2235).